Consider the following 214-residue polypeptide: Coiled-coil domain-containing protein 169 (214 aa).

Positions 56 to 138 form a coiled coil; it reads SEWKTRYETQ…YAFRLEQESK (83 aa). A disordered region spans residues 154–214; the sequence is MTQVSGSNQV…RSNHLPKLNP (61 aa). 2 stretches are compositionally biased toward polar residues: residues 155–166 and 185–195; these read TQVSGSNQVSKR and HNSMNQKTTNA.

Belongs to the CCDC169 family.

This is Coiled-coil domain-containing protein 169 (Ccdc169) from Mus musculus (Mouse).